Consider the following 317-residue polypeptide: L-lactate dehydrogenase (317 aa).

NAD(+) contacts are provided by residues Val17, Asp38, Lys43, Tyr68, and Gly82–Val83. Substrate is bound at residue Arg91. NAD(+) is bound by residues Ser104, Val121 to Asn123, and Ser146. Asn123–Asp126 contacts substrate. Asp151–Arg154 is a substrate binding site. The beta-D-fructose 1,6-bisphosphate site is built by Lys156 and His171. The active-site Proton acceptor is His178. Tyr224 is subject to Phosphotyrosine. Thr233 is a substrate binding site.

The protein belongs to the LDH/MDH superfamily. LDH family. In terms of assembly, homotetramer.

It localises to the cytoplasm. The catalysed reaction is (S)-lactate + NAD(+) = pyruvate + NADH + H(+). Its pathway is fermentation; pyruvate fermentation to lactate; (S)-lactate from pyruvate: step 1/1. With respect to regulation, allosterically activated by fructose 1,6-bisphosphate (FBP). Functionally, catalyzes the conversion of lactate to pyruvate. This is L-lactate dehydrogenase from Clostridium perfringens (strain ATCC 13124 / DSM 756 / JCM 1290 / NCIMB 6125 / NCTC 8237 / Type A).